Reading from the N-terminus, the 129-residue chain is uncharacterized protein (129 aa).

The disordered stretch occupies residues 52 to 94 (NGDEESQDDWLNDLLKSDGDGGKAGPVDPSHPMETTTTDHSSQ). The span at 53–62 (GDEESQDDWL) shows a compositional bias: acidic residues. Positions 84–94 (METTTTDHSSQ) are enriched in polar residues.

This is an uncharacterized protein from Caenorhabditis elegans.